Reading from the N-terminus, the 525-residue chain is GMP synthase [glutamine-hydrolyzing] (525 aa).

The region spanning 9-207 (RILILDFGSQ…VRDICQCEAL (199 aa)) is the Glutamine amidotransferase type-1 domain. Residue Cys86 is the Nucleophile of the active site. Residues His181 and Glu183 contribute to the active site. Residues 208–400 (WTPAKIIDDA…LGLPYDMLYR (193 aa)) form the GMPS ATP-PPase domain. 235–241 (SGGVDSS) contributes to the ATP binding site.

Homodimer.

It catalyses the reaction XMP + L-glutamine + ATP + H2O = GMP + L-glutamate + AMP + diphosphate + 2 H(+). Its pathway is purine metabolism; GMP biosynthesis; GMP from XMP (L-Gln route): step 1/1. In terms of biological role, catalyzes the synthesis of GMP from XMP. The protein is GMP synthase [glutamine-hydrolyzing] of Escherichia fergusonii (strain ATCC 35469 / DSM 13698 / CCUG 18766 / IAM 14443 / JCM 21226 / LMG 7866 / NBRC 102419 / NCTC 12128 / CDC 0568-73).